Here is an 89-residue protein sequence, read N- to C-terminus: Large ribosomal subunit protein uL24 (89 aa).

Belongs to the universal ribosomal protein uL24 family. Part of the 50S ribosomal subunit.

Its function is as follows. One of two assembly initiator proteins, it binds directly to the 5'-end of the 23S rRNA, where it nucleates assembly of the 50S subunit. Functionally, one of the proteins that surrounds the polypeptide exit tunnel on the outside of the subunit. This chain is Large ribosomal subunit protein uL24, found in Oenococcus oeni (strain ATCC BAA-331 / PSU-1).